Reading from the N-terminus, the 319-residue chain is Transcription elongation factor A protein 1 (319 aa).

The TFIIS N-terminal domain occupies 1 to 78 (MQEIIKCREQ…DKWKQDIEGT (78 aa)). Residues 78 to 106 (TSATTTSSSSSSSSSTTSTTTTKTASPSE) show a composition bias toward low complexity. The tract at residues 78–146 (TSATTTSSSS…TTPKTSSPPI (69 aa)) is disordered. Residues 107 to 122 (SLKRKSISEDTSDRPT) show a composition bias toward basic and acidic residues. Low complexity predominate over residues 133 to 146 (ISPPTTPKTSSPPI). The TFIIS central domain occupies 160 to 272 (LRNKTIQLFV…ASMLGQNNEA (113 aa)). The segment at 275–317 (DQFQCGKCKQRKCTYTQLQTRSADEPPTTFVKCCVKGCGNRWR) adopts a TFIIS-type zinc-finger fold. Residues cysteine 279, cysteine 282, cysteine 307, and cysteine 312 each contribute to the Zn(2+) site.

This sequence belongs to the TFS-II family.

The protein resides in the nucleus. Its function is as follows. Necessary for efficient RNA polymerase II transcription elongation past template-encoded arresting sites. The arresting sites in DNA have the property of trapping a certain fraction of elongating RNA polymerases that pass through, resulting in locked ternary complexes. Cleavage of the nascent transcript by S-II allows the resumption of elongation from the new 3'-terminus. In Dictyostelium discoideum (Social amoeba), this protein is Transcription elongation factor A protein 1 (tcea1).